A 445-amino-acid chain; its full sequence is Alkylglycerol monooxygenase (445 aa).

Transmembrane regions (helical) follow at residues 43–63 and 111–131; these read ATPFFISLMLLELVVSWILKG and WDSPWTWYSAFLGVDFGYYWF. In terms of domain architecture, Fatty acid hydroxylase spans 120 to 249; sequence AFLGVDFGYY…LIIWDKIFGT (130 aa). The short motif at 132–136 is the Histidine box-1 element; it reads HRMAH. The short motif at 145-149 is the Histidine box-2 element; sequence HQTHH. The short motif at 221-225 is the Histidine box-3 element; sequence HRVHH. A run of 3 helical transmembrane segments spans residues 334–354, 363–383, and 413–433; these read LLKIYTVVQFALMLAFYEETF, VTLLLRVCFIILTLTSIGFLL, and VPSLSSAFEIVFSICIAFWGV.

The protein belongs to the sterol desaturase family. TMEM195 subfamily. It depends on Fe cation as a cofactor.

It localises to the endoplasmic reticulum membrane. It carries out the reaction 1-O-(1,2-saturated-alkyl)-sn-glycerol + (6R)-L-erythro-5,6,7,8-tetrahydrobiopterin + O2 = a 1-(1-hydroxyalkyl)-sn-glycerol + (6R)-L-erythro-6,7-dihydrobiopterin + H2O. Its function is as follows. Glyceryl-ether monooxygenase that cleaves the O-alkyl bond of ether lipids. Ether lipids are essential components of brain membranes. The chain is Alkylglycerol monooxygenase (AGMO) from Homo sapiens (Human).